Here is a 281-residue protein sequence, read N- to C-terminus: 3-methyl-2-oxobutanoate hydroxymethyltransferase (281 aa).

D49 and D88 together coordinate Mg(2+). 3-methyl-2-oxobutanoate contacts are provided by residues 49 to 50 (DS), D88, and K118. E120 is a Mg(2+) binding site. Catalysis depends on E186, which acts as the Proton acceptor.

The protein belongs to the PanB family. As to quaternary structure, homodecamer; pentamer of dimers. Requires Mg(2+) as cofactor.

It localises to the cytoplasm. The enzyme catalyses 3-methyl-2-oxobutanoate + (6R)-5,10-methylene-5,6,7,8-tetrahydrofolate + H2O = 2-dehydropantoate + (6S)-5,6,7,8-tetrahydrofolate. Its pathway is cofactor biosynthesis; (R)-pantothenate biosynthesis; (R)-pantoate from 3-methyl-2-oxobutanoate: step 1/2. Catalyzes the reversible reaction in which hydroxymethyl group from 5,10-methylenetetrahydrofolate is transferred onto alpha-ketoisovalerate to form ketopantoate. The chain is 3-methyl-2-oxobutanoate hydroxymethyltransferase from Chelativorans sp. (strain BNC1).